The primary structure comprises 160 residues: 2-C-methyl-D-erythritol 2,4-cyclodiphosphate synthase (160 aa).

Residues Asp10 and His12 each contribute to the a divalent metal cation site. Residues 10 to 12 and 36 to 37 contribute to the 4-CDP-2-C-methyl-D-erythritol 2-phosphate site; these read DVH and HS. Position 44 (His44) interacts with a divalent metal cation. 4-CDP-2-C-methyl-D-erythritol 2-phosphate-binding positions include 58-60, 134-137, Phe141, and Arg144; these read DIG and TTTE.

It belongs to the IspF family. In terms of assembly, homotrimer. Requires a divalent metal cation as cofactor.

It carries out the reaction 4-CDP-2-C-methyl-D-erythritol 2-phosphate = 2-C-methyl-D-erythritol 2,4-cyclic diphosphate + CMP. It functions in the pathway isoprenoid biosynthesis; isopentenyl diphosphate biosynthesis via DXP pathway; isopentenyl diphosphate from 1-deoxy-D-xylulose 5-phosphate: step 4/6. Functionally, involved in the biosynthesis of isopentenyl diphosphate (IPP) and dimethylallyl diphosphate (DMAPP), two major building blocks of isoprenoid compounds. Catalyzes the conversion of 4-diphosphocytidyl-2-C-methyl-D-erythritol 2-phosphate (CDP-ME2P) to 2-C-methyl-D-erythritol 2,4-cyclodiphosphate (ME-CPP) with a corresponding release of cytidine 5-monophosphate (CMP). The sequence is that of 2-C-methyl-D-erythritol 2,4-cyclodiphosphate synthase from Phocaeicola vulgatus (strain ATCC 8482 / DSM 1447 / JCM 5826 / CCUG 4940 / NBRC 14291 / NCTC 11154) (Bacteroides vulgatus).